Here is a 752-residue protein sequence, read N- to C-terminus: Xanthine dehydrogenase molybdenum-binding subunit (752 aa).

Mo-molybdopterin-binding residues include glutamine 206, phenylalanine 237, arginine 350, and alanine 516.

The protein belongs to the xanthine dehydrogenase family. As to quaternary structure, heterotrimer of XdhA, XdhB and XdhC. Mo-molybdopterin serves as cofactor.

It carries out the reaction xanthine + NAD(+) + H2O = urate + NADH + H(+). The enzyme catalyses hypoxanthine + NAD(+) + H2O = xanthine + NADH + H(+). It participates in purine metabolism; hypoxanthine degradation; urate from hypoxanthine: step 1/2. The protein operates within purine metabolism; hypoxanthine degradation; urate from hypoxanthine: step 2/2. In terms of biological role, presumed to be a dehydrogenase, but possibly an oxidase. Participates in limited purine salvage (requires aspartate) but does not support aerobic growth on purines as the sole carbon source (purine catabolism). The polypeptide is Xanthine dehydrogenase molybdenum-binding subunit (xdhA) (Escherichia coli O157:H7).